We begin with the raw amino-acid sequence, 480 residues long: MSFPQLGYPQYLSAAGPGAYGGERPGVLAAAAAAAAAASSGRPGAAELGGGAGAAAVTSVLGMYAAAGPYAGAPNYSAFLPYAADLSLFSQMGSQYELKDNPGVHPATFAAHTAPAYYPYGQFQYGDPGRPKNATRESTSTLKAWLNEHRKNPYPTKGEKIMLAIITKMTLTQVSTWFANARRRLKKENKVTWGARSKDQEDGALFGSDTEGDPEKAEDDEEIDLESIDIDKIDEHDGDQSNEDDEDKAEAPHAPAAPSALARDQGSPLAAADVLKPQDSPLGLAKEAPEPGSTRLLSPGAAAGGLQGAPHGKPKIWSLAETATSPDGAPKASPPPPAGHPGAHGPSAGAPLQHPAFLPSHGLYTCHIGKFSNWTNSAFLAQGSLLNMRSFLGVGAPHAAPHGPHLPAPPPPQPPVAIAPGALNGDKASVRSSPTLPERDLVPRPDSPAQQLKSPFQPVRDNSLAPQEGTPRILAALPSA.

A DNA-binding region (homeobox; TALE-type) is located at residues 125-188 (YGDPGRPKNA…ANARRRLKKE (64 aa)). 3 disordered regions span residues 190–268 (KVTW…QGSP), 280–354 (SPLG…PLQH), and 401–480 (PHGP…LPSA). Positions 210-228 (TEGDPEKAEDDEEIDLESI) are enriched in acidic residues. Over residues 229–239 (DIDKIDEHDGD) the composition is skewed to basic and acidic residues. S241 is subject to Phosphoserine. 2 stretches are compositionally biased toward low complexity: residues 252-262 (PHAPAAPSALA) and 340-351 (HPGAHGPSAGAP). The span at 404 to 417 (PHLPAPPPPQPPVA) shows a compositional bias: pro residues.

Belongs to the TALE/IRO homeobox family.

The protein resides in the nucleus. This chain is Iroquois-class homeodomain protein IRX-1 (IRX1), found in Homo sapiens (Human).